The following is a 643-amino-acid chain: Threonine--tRNA ligase (643 aa).

A TGS domain is found at Met1–Tyr61. The interval Asp244–Pro535 is catalytic. Zn(2+) is bound by residues Cys335, His386, and His512.

The protein belongs to the class-II aminoacyl-tRNA synthetase family. As to quaternary structure, homodimer. Requires Zn(2+) as cofactor.

The protein localises to the cytoplasm. It catalyses the reaction tRNA(Thr) + L-threonine + ATP = L-threonyl-tRNA(Thr) + AMP + diphosphate + H(+). In terms of biological role, catalyzes the attachment of threonine to tRNA(Thr) in a two-step reaction: L-threonine is first activated by ATP to form Thr-AMP and then transferred to the acceptor end of tRNA(Thr). Also edits incorrectly charged L-seryl-tRNA(Thr). In Buchnera aphidicola subsp. Baizongia pistaciae (strain Bp), this protein is Threonine--tRNA ligase.